We begin with the raw amino-acid sequence, 405 residues long: Glucoside xylosyltransferase 1 (405 aa).

Residues 1–2 are Cytoplasmic-facing; the sequence is MR. Residues 3 to 23 form a helical; Signal-anchor for type II membrane protein membrane-spanning segment; the sequence is IYLRTFGLCIVVALLSLVFLF. Topologically, residues 24 to 405 are lumenal; that stretch reads SKHDEGSFSA…RLQRATPPGD (382 aa). The segment at 46 to 65 is disordered; it reads SFNGAKAKQRPTATTSHRDV. Residues asparagine 202, asparagine 243, asparagine 277, and asparagine 372 are each glycosylated (N-linked (GlcNAc...) asparagine).

It belongs to the glycosyltransferase 8 family.

It is found in the membrane. The enzyme catalyses 3-O-(beta-D-glucosyl)-L-seryl-[EGF-like domain protein] + UDP-alpha-D-xylose = 3-O-[alpha-D-xylosyl-(1-&gt;3)-beta-D-glucosyl]-L-seryl-[EGF-like domain protein] + UDP + H(+). Glycosyltransferase which elongates the O-linked glucose attached to EGF-like repeats in the extracellular domain of Notch proteins by catalyzing the addition of xylose. The chain is Glucoside xylosyltransferase 1 (gxylt1) from Danio rerio (Zebrafish).